The primary structure comprises 276 residues: Biotin synthase (276 aa).

The region spanning 1–226 (MKKIYLCAIS…EAIIMLAGGR (226 aa)) is the Radical SAM core domain. C17, C21, and C24 together coordinate [4Fe-4S] cluster. Positions 61, 95, and 153 each coordinate [2Fe-2S] cluster.

This sequence belongs to the radical SAM superfamily. Biotin synthase family. In terms of assembly, homodimer. Requires [4Fe-4S] cluster as cofactor. [2Fe-2S] cluster serves as cofactor.

It catalyses the reaction (4R,5S)-dethiobiotin + (sulfur carrier)-SH + 2 reduced [2Fe-2S]-[ferredoxin] + 2 S-adenosyl-L-methionine = (sulfur carrier)-H + biotin + 2 5'-deoxyadenosine + 2 L-methionine + 2 oxidized [2Fe-2S]-[ferredoxin]. Its pathway is cofactor biosynthesis; biotin biosynthesis; biotin from 7,8-diaminononanoate: step 2/2. Functionally, catalyzes the conversion of dethiobiotin (DTB) to biotin by the insertion of a sulfur atom into dethiobiotin via a radical-based mechanism. This Nautilia profundicola (strain ATCC BAA-1463 / DSM 18972 / AmH) protein is Biotin synthase.